The primary structure comprises 140 residues: Large ribosomal subunit protein uL11 (140 aa).

This sequence belongs to the universal ribosomal protein uL11 family. Part of the ribosomal stalk of the 50S ribosomal subunit. Interacts with L10 and the large rRNA to form the base of the stalk. L10 forms an elongated spine to which L12 dimers bind in a sequential fashion forming a multimeric L10(L12)X complex. In terms of processing, one or more lysine residues are methylated.

Its function is as follows. Forms part of the ribosomal stalk which helps the ribosome interact with GTP-bound translation factors. The sequence is that of Large ribosomal subunit protein uL11 from Dehalococcoides mccartyi (strain CBDB1).